Consider the following 283-residue polypeptide: Large ribosomal subunit protein uL2 (283 aa).

Disordered stretches follow at residues 34 to 53 and 224 to 283; these read TEPYKKKGGRNNYGRITARH and AMNP…KKKK. The span at 232 to 245 shows a compositional bias: gly residues; the sequence is NGGGQGKSKGGGGW. A compositionally biased stretch (basic residues) spans 256 to 268; sequence AKGKKTRHKRKNS.

The protein belongs to the universal ribosomal protein uL2 family. As to quaternary structure, part of the 50S ribosomal subunit. Forms a bridge to the 30S subunit in the 70S ribosome.

In terms of biological role, one of the primary rRNA binding proteins. Required for association of the 30S and 50S subunits to form the 70S ribosome, for tRNA binding and peptide bond formation. It has been suggested to have peptidyltransferase activity; this is somewhat controversial. Makes several contacts with the 16S rRNA in the 70S ribosome. The protein is Large ribosomal subunit protein uL2 of Methylacidiphilum infernorum (isolate V4) (Methylokorus infernorum (strain V4)).